Here is a 49-residue protein sequence, read N- to C-terminus: MRVNITLACTECKQRNYNTSKNKKSNPDRMELKKYCKFCKTHTAHRETK.

It belongs to the bacterial ribosomal protein bL33 family.

This chain is Large ribosomal subunit protein bL33, found in Alkaliphilus oremlandii (strain OhILAs) (Clostridium oremlandii (strain OhILAs)).